Here is a 776-residue protein sequence, read N- to C-terminus: MDRVWRAWDGQSFKENQPESPSARGIVVSWLSRAEWEQVTVYLFCDDHKLQQYALNRITVWRSRLGNELPLAVASTADLVRCKLIDAAGTLGTDELRLLYGMALVRFVNLISERKTKCSNLPLKYLAQEVNIPDWIVELRHNLTHKKMPHINECRRGCYFVLNWLQKTYWSRQLEGSLKETWELDEDQLDAEDPEEEEREIIADDVLEEIPEPQDDDKDEELAVEDDANTKGNEEVASHPEPSSRHKELYEKARELLVSYEEEQFKVLEKHRHLLQAIKVWNNLSPRVQCILEELKSISWENRDAVLDAFLDDGFLIPTFEQLAALQIEYEDGQTEVQKGEVTEPNSHKNIDLNEVLVPKPFSQFWQPLLRGLHSQTFTQALLERMFSELSTVGSTGIRPTYILRWTVELIVANTKTGRNARRFSASQWEARKSWRLFNCSATLDWPQVIESCLGSPCWASPQLLQVVFKAMGQVLPDEEQEKLLRVCSIYTQNGENGLAKAIEGSSSSSTGKAPYTLDTLHEDLQPPGTNCESEESIQQKEQGNLKDVKQEEKKENEEEEKEEEEMEEEEEEEEEEKEEEEEEQEQEEHQEEEQEEEEEEENQKVFQDQMEADVEESDDVEEEEEVDDEEEDEDDDYDDDEEEDRMEVGAFSLAQGSSVFENTRTTSRKREALQGSAWQVSSEDVRWGTFPLGRLPGQTEDPAELMLDNYDTMYLLDQPVIEHRLEPQKSKSSTLSLCCGGSNTNSSSSSSSGNMEGLLWNQGQMHGLKAGLQLF.

A compositionally biased stretch (acidic residues) spans 185–227; it reads DEDQLDAEDPEEEEREIIADDVLEEIPEPQDDDKDEELAVEDD. The interval 185–247 is disordered; that stretch reads DEDQLDAEDP…SHPEPSSRHK (63 aa). Residues 228 to 247 are compositionally biased toward basic and acidic residues; that stretch reads ANTKGNEEVASHPEPSSRHK. Phosphoserine is present on residues Ser-425 and Ser-509. The tract at residues 501 to 646 is disordered; that stretch reads KAIEGSSSSS…DYDDDEEEDR (146 aa). Basic and acidic residues predominate over residues 544–557; that stretch reads GNLKDVKQEEKKEN. 2 stretches are compositionally biased toward acidic residues: residues 558-602 and 611-646; these read EEEE…EEEE and MEAD…EEDR. A Phosphoserine modification is found at Ser-658. An interaction with NOL9 region spans residues 677 to 696; that stretch reads SAWQVSSEDVRWGTFPLGRL. A disordered region spans residues 733–759; that stretch reads SSTLSLCCGGSNTNSSSSSSSGNMEGL. The segment covering 741–755 has biased composition (low complexity); the sequence is GGSNTNSSSSSSSGN.

Belongs to the LAS1 family. As to quaternary structure, component of some MLL1/MLL complex, at least composed of the core components KMT2A/MLL1, ASH2L, HCFC1/HCF1, WDR5 and RBBP5, as well as the facultative components BACC1, CHD8, E2F6, HSP70, INO80C, KANSL1, LAS1L, MAX, MCRS1, MGA, MYST1/MOF, PELP1, PHF20, PRP31, RING2, RUVB1/TIP49A, RUVB2/TIP49B, SENP3, TAF1, TAF4, TAF6, TAF7, TAF9 and TEX10. Component of the 5FMC complex, at least composed of PELP1, LAS1L, TEX10, WDR18 and SENP3; the complex interacts with methylated CHTOP and ZNF148. Interacts with NOL9 to form an ITS2 pre-rRNA endonuclease-kinase complex.

It is found in the nucleus. The protein resides in the nucleolus. It localises to the nucleoplasm. The protein localises to the cytoplasm. In terms of biological role, required for the synthesis of the 60S ribosomal subunit and maturation of the 28S rRNA. Functions as a component of the Five Friends of Methylated CHTOP (5FMC) complex; the 5FMC complex is recruited to ZNF148 by methylated CHTOP, leading to desumoylation of ZNF148 and subsequent transactivation of ZNF148 target genes. Required for the efficient pre-rRNA processing at both ends of internal transcribed spacer 2 (ITS2). This chain is Ribosomal biogenesis protein LAS1L (Las1l), found in Mus musculus (Mouse).